We begin with the raw amino-acid sequence, 100 residues long: MGDPEVLLEVYEVIRNRIEERPEGSYVAELTEDDDTKPAINKICEKIIEESGELILAAKDGDREGVVYESTDLIFHVLVLLAYLGIEIGEVFDEFERRRK.

It belongs to the PRA-PH family.

The protein resides in the cytoplasm. The enzyme catalyses 1-(5-phospho-beta-D-ribosyl)-ATP + H2O = 1-(5-phospho-beta-D-ribosyl)-5'-AMP + diphosphate + H(+). It participates in amino-acid biosynthesis; L-histidine biosynthesis; L-histidine from 5-phospho-alpha-D-ribose 1-diphosphate: step 2/9. The chain is Phosphoribosyl-ATP pyrophosphatase (hisE) from Methanopyrus kandleri (strain AV19 / DSM 6324 / JCM 9639 / NBRC 100938).